A 382-amino-acid chain; its full sequence is Protein arginine N-methyltransferase PRMT10 (382 aa).

Residues 1 to 21 form a disordered region; the sequence is MASLPNGAASASAASSAAGGG. Residues 7–17 are compositionally biased toward low complexity; sequence GAASASAASSA. One can recognise an SAM-dependent MTase PRMT-type domain in the interval 28–359; the sequence is EVDFANYFCT…KENHRLMDME (332 aa). Residues glutamate 142 and glutamate 151 contribute to the active site. Residues 189 to 229 are dimerization arm; the sequence is ENKMEDLEIAMHDWNLFVEDTESYYGVNMNVLTKAYRAEHE.

This sequence belongs to the class I-like SAM-binding methyltransferase superfamily. Protein arginine N-methyltransferase family. In terms of assembly, ring-like homodimer.

It carries out the reaction L-arginyl-[protein] + 2 S-adenosyl-L-methionine = N(omega),N(omega)-dimethyl-L-arginyl-[protein] + 2 S-adenosyl-L-homocysteine + 2 H(+). Methylates (mono and asymmetric dimethylation) the guanidino nitrogens of arginyl residues in some proteins. The sequence is that of Protein arginine N-methyltransferase PRMT10 (PRMT10) from Oryza sativa subsp. indica (Rice).